The following is a 616-amino-acid chain: Chaperone protein HscA (616 aa).

It belongs to the heat shock protein 70 family.

Its function is as follows. Chaperone involved in the maturation of iron-sulfur cluster-containing proteins. Has a low intrinsic ATPase activity which is markedly stimulated by HscB. Involved in the maturation of IscU. This is Chaperone protein HscA from Proteus mirabilis (strain HI4320).